The chain runs to 375 residues: MQKLQLCVYIYLFMLIVAGPVDLNENSEQKENVEKEGLCNACTWRQNTKSSRIEAIKIQILSKLRLETAPNISKDAIRQLLPKAPPLRELIDQYDVQRDDSSDGSLEDDDYHATTETIITMPTESDFLMQVDGKPKCCFFKFSSKIQYNKVVKAQLWIYLRPVETPTTVFVQILRLIKPMKDGTRYTGIRSLKLDMNPGTGIWQSIDVKTVLQNWLKQPESNLGIEIKALDENGHDLAVTFPGPGEDGLNPFLEVKVTDTPKRSRRDFGLDCDEHSTESRCCRYPLTVDFEAFGWDWIIAPKRYKANYCSGECEFVFLQKYPHTHLVHQANPRGSAGPCCTPTKMSPINMLYFNGKEQIIYGKIPAMVVDRCGCS.

The N-terminal stretch at 1–23 (MQKLQLCVYIYLFMLIVAGPVDL) is a signal peptide. Positions 24 to 266 (NENSEQKENV…VTDTPKRSRR (243 aa)) are excised as a propeptide. N-linked (GlcNAc...) asparagine glycosylation occurs at Asn-71. 4 disulfide bridges follow: Cys-272/Cys-282, Cys-281/Cys-340, Cys-309/Cys-372, and Cys-313/Cys-374.

It belongs to the TGF-beta family. Homodimer; disulfide-linked. Interacts with WFIKKN2, leading to inhibit its activity. Interacts with FSTL3. Post-translationally, synthesized as large precursor molecule that undergoes proteolytic cleavage to generate an N-terminal propeptide and a disulfide linked C-terminal dimer, which is the biologically active molecule. The circulating form consists of a latent complex of the C-terminal dimer and other proteins, including its propeptide, which maintain the C-terminal dimer in a latent, inactive state. Ligand activation requires additional cleavage of the prodomain by a tolloid-like metalloproteinase.

The protein resides in the secreted. In terms of biological role, acts specifically as a negative regulator of skeletal muscle growth. This Pan paniscus (Pygmy chimpanzee) protein is Growth/differentiation factor 8 (MSTN).